A 642-amino-acid polypeptide reads, in one-letter code: Threonine--tRNA ligase (642 aa).

A TGS domain is found at methionine 1 to threonine 61. The catalytic stretch occupies residues aspartate 243–proline 534. The Zn(2+) site is built by cysteine 334, histidine 385, and histidine 511.

The protein belongs to the class-II aminoacyl-tRNA synthetase family. In terms of assembly, homodimer. Zn(2+) is required as a cofactor.

It localises to the cytoplasm. The catalysed reaction is tRNA(Thr) + L-threonine + ATP = L-threonyl-tRNA(Thr) + AMP + diphosphate + H(+). Catalyzes the attachment of threonine to tRNA(Thr) in a two-step reaction: L-threonine is first activated by ATP to form Thr-AMP and then transferred to the acceptor end of tRNA(Thr). Also edits incorrectly charged L-seryl-tRNA(Thr). In Cellvibrio japonicus (strain Ueda107) (Pseudomonas fluorescens subsp. cellulosa), this protein is Threonine--tRNA ligase.